A 365-amino-acid polypeptide reads, in one-letter code: tRNA 2-selenouridine synthase (365 aa).

The Rhodanese domain maps to 15 to 138; that stretch reads LVSDHPIMDA…MRQFLIETID (124 aa). The active-site S-selanylcysteine intermediate is the Cys-98.

It belongs to the SelU family. As to quaternary structure, monomer.

The enzyme catalyses 5-methylaminomethyl-2-thiouridine(34) in tRNA + selenophosphate + (2E)-geranyl diphosphate + H2O + H(+) = 5-methylaminomethyl-2-selenouridine(34) in tRNA + (2E)-thiogeraniol + phosphate + diphosphate. It catalyses the reaction 5-methylaminomethyl-2-thiouridine(34) in tRNA + (2E)-geranyl diphosphate = 5-methylaminomethyl-S-(2E)-geranyl-thiouridine(34) in tRNA + diphosphate. The catalysed reaction is 5-methylaminomethyl-S-(2E)-geranyl-thiouridine(34) in tRNA + selenophosphate + H(+) = 5-methylaminomethyl-2-(Se-phospho)selenouridine(34) in tRNA + (2E)-thiogeraniol. It carries out the reaction 5-methylaminomethyl-2-(Se-phospho)selenouridine(34) in tRNA + H2O = 5-methylaminomethyl-2-selenouridine(34) in tRNA + phosphate. Involved in the post-transcriptional modification of the uridine at the wobble position (U34) of tRNA(Lys), tRNA(Glu) and tRNA(Gln). Catalyzes the conversion of 2-thiouridine (S2U-RNA) to 2-selenouridine (Se2U-RNA). Acts in a two-step process involving geranylation of 2-thiouridine (S2U) to S-geranyl-2-thiouridine (geS2U) and subsequent selenation of the latter derivative to 2-selenouridine (Se2U) in the tRNA chain. The sequence is that of tRNA 2-selenouridine synthase from Shewanella piezotolerans (strain WP3 / JCM 13877).